The chain runs to 371 residues: Peptide chain release factor 2 (371 aa).

An N5-methylglutamine modification is found at glutamine 250.

Belongs to the prokaryotic/mitochondrial release factor family. Methylated by PrmC. Methylation increases the termination efficiency of RF2.

The protein resides in the cytoplasm. Its function is as follows. Peptide chain release factor 2 directs the termination of translation in response to the peptide chain termination codons UGA and UAA. The polypeptide is Peptide chain release factor 2 (Paramagnetospirillum magneticum (strain ATCC 700264 / AMB-1) (Magnetospirillum magneticum)).